Reading from the N-terminus, the 163-residue chain is IQ domain-containing protein F2 (163 aa).

2 consecutive IQ domains span residues 42 to 71 (RVIA…STWI) and 98 to 127 (RERA…AIYV).

This is IQ domain-containing protein F2 (IQCF2) from Bos taurus (Bovine).